Reading from the N-terminus, the 113-residue chain is MKKFAIKFIAFYQKYISILLPKSCRYYPTCSQYAIWEFQTNSFFSAFFATFMRILRCNQLFKGGINYPIIRKKFNSCFIFQKSDTKNVNFWFIPCQNSKFYVVKVLDKLKEKN.

The protein belongs to the UPF0161 family.

It is found in the cell inner membrane. Could be involved in insertion of integral membrane proteins into the membrane. The chain is Putative membrane protein insertion efficiency factor from Campylobacter concisus (strain 13826).